Here is a 580-residue protein sequence, read N- to C-terminus: Proline--tRNA ligase (580 aa).

It belongs to the class-II aminoacyl-tRNA synthetase family. ProS type 1 subfamily. In terms of assembly, homodimer.

The protein localises to the cytoplasm. The catalysed reaction is tRNA(Pro) + L-proline + ATP = L-prolyl-tRNA(Pro) + AMP + diphosphate. Its function is as follows. Catalyzes the attachment of proline to tRNA(Pro) in a two-step reaction: proline is first activated by ATP to form Pro-AMP and then transferred to the acceptor end of tRNA(Pro). As ProRS can inadvertently accommodate and process non-cognate amino acids such as alanine and cysteine, to avoid such errors it has two additional distinct editing activities against alanine. One activity is designated as 'pretransfer' editing and involves the tRNA(Pro)-independent hydrolysis of activated Ala-AMP. The other activity is designated 'posttransfer' editing and involves deacylation of mischarged Ala-tRNA(Pro). The misacylated Cys-tRNA(Pro) is not edited by ProRS. The sequence is that of Proline--tRNA ligase from Maridesulfovibrio salexigens (strain ATCC 14822 / DSM 2638 / NCIMB 8403 / VKM B-1763) (Desulfovibrio salexigens).